The primary structure comprises 545 residues: MSLRESPFPNGFLEGLHAVGWGLIFPCFWFLDRLIAVCISTTLERMWRLEQECYLHPLKVVFGSILFFILFVISTPFALLGFILWAPLQAIRRPFSYHKQEQSIPMENRNARWEEMGKISFGFLTANVCLLPDGIARFNNLGHTQKRALIIGKSIVQGVTRPHIRIFVDSPSSCGTVTPSSSLIPQPNASSYGSVDASGELPDAIEVNEITPKPNCNQNSNHQKHPPRSLRTLLRDADIPMEVSALFPPSVDIVCLQEVFDKRAARKLTQALGPLYGHVLYDVGVYACHPAGSCSSFKFFNSGLFLASRFPIMEAEYRCFPNGRGEDALAAKGLLTVKVDIGLQKGEKRMVGFINCTHLHAPEGDGAIRFEQLNMLSKWTSEFQTLNRRDDELPLFDVLCGDFNFDNCSPDDRLEQSHSVFDEYTDPCRAAAGKEKPWVIGTLLEQPTLYDENMRTPDNLQRTLESEDLRKDFISPPVALDGVPLVYPEADQPWIGRRIDYLLYREKSGHRTEVEELTYVTQLAGLTDHIPVGFRLSVSLDSEQN.

A mitochondrion-targeting transit peptide spans 1–35 (MSLRESPFPNGFLEGLHAVGWGLIFPCFWFLDRLI). The Mitochondrial matrix portion of the chain corresponds to 36 to 64 (AVCISTTLERMWRLEQECYLHPLKVVFGS). The helical; Signal-anchor for type II membrane protein transmembrane segment at 65–85 (ILFFILFVISTPFALLGFILW) threads the bilayer. At 86–545 (APLQAIRRPF…LSVSLDSEQN (460 aa)) the chain is on the mitochondrial intermembrane side. E258 contributes to the Mg(2+) binding site. H529 acts as the Proton acceptor in catalysis.

This sequence belongs to the neutral sphingomyelinase family. Mg(2+) is required as a cofactor. Mn(2+) serves as cofactor.

Its subcellular location is the mitochondrion inner membrane. The protein resides in the endoplasmic reticulum membrane. It carries out the reaction a sphingomyelin + H2O = phosphocholine + an N-acylsphing-4-enine + H(+). The catalysed reaction is N-(hexadecanoyl)-sphing-4-enine-1-phosphocholine + H2O = N-hexadecanoylsphing-4-enine + phosphocholine + H(+). It functions in the pathway lipid metabolism; sphingolipid metabolism. Activated by the phospholipids cardiolipin, phosphatidylserine, and phosphatidylethanolamine. Strongest activation with cardiolipin. In terms of biological role, catalyzes the hydrolysis of membrane sphingomyelin to form phosphorylcholine and ceramide. This chain is Sphingomyelin phosphodiesterase 5, found in Danio rerio (Zebrafish).